We begin with the raw amino-acid sequence, 284 residues long: 4-diphosphocytidyl-2-C-methyl-D-erythritol kinase (284 aa).

The active site involves Lys-9. 90 to 100 (PLVSGLGGDSS) is an ATP binding site. Asp-132 is a catalytic residue.

It belongs to the GHMP kinase family. IspE subfamily.

The catalysed reaction is 4-CDP-2-C-methyl-D-erythritol + ATP = 4-CDP-2-C-methyl-D-erythritol 2-phosphate + ADP + H(+). Its pathway is isoprenoid biosynthesis; isopentenyl diphosphate biosynthesis via DXP pathway; isopentenyl diphosphate from 1-deoxy-D-xylulose 5-phosphate: step 3/6. Catalyzes the phosphorylation of the position 2 hydroxy group of 4-diphosphocytidyl-2C-methyl-D-erythritol. The polypeptide is 4-diphosphocytidyl-2-C-methyl-D-erythritol kinase (Dehalococcoides mccartyi (strain ATCC BAA-2266 / KCTC 15142 / 195) (Dehalococcoides ethenogenes (strain 195))).